The primary structure comprises 122 residues: Small ribosomal subunit protein uS13 (122 aa).

The interval R99 to K122 is disordered.

It belongs to the universal ribosomal protein uS13 family. As to quaternary structure, part of the 30S ribosomal subunit. Forms a loose heterodimer with protein S19. Forms two bridges to the 50S subunit in the 70S ribosome.

Its function is as follows. Located at the top of the head of the 30S subunit, it contacts several helices of the 16S rRNA. In the 70S ribosome it contacts the 23S rRNA (bridge B1a) and protein L5 of the 50S subunit (bridge B1b), connecting the 2 subunits; these bridges are implicated in subunit movement. Contacts the tRNAs in the A and P-sites. The polypeptide is Small ribosomal subunit protein uS13 (Rhizobium etli (strain CIAT 652)).